We begin with the raw amino-acid sequence, 409 residues long: Nucleoprotein (409 aa).

Disordered stretches follow at residues 1–32, 44–63, 120–145, and 164–193; these read MASG…SSGN, LNSP…ENLK, GADT…LRFS, and RSGR…SGAE. A compositionally biased stretch (low complexity) spans 15–31; that stretch reads PVIKLGGPKPPKVGSSG. Residues 29–160 are RNA-binding; the sequence is SSGNASWFQA…GNFRWDFIPI (132 aa). One can recognise a CoV N NTD domain in the interval 31 to 156; sequence GNASWFQALK…GGPDGNFRWD (126 aa). Positions 164 to 179 are enriched in low complexity; the sequence is RSGRSTAASSAASSRA. The span at 180-192 shows a compositional bias: basic and acidic residues; the sequence is PSRDGSRGRRSGA. Ser-190 carries the phosphoserine; by host modification. Residues 215–331 enclose the CoV N CTD domain; that stretch reads TKAKADEMAH…QCVDGVGTRP (117 aa). A dimerization region spans residues 226 to 333; it reads RYCKRTIPPG…VDGVGTRPKD (108 aa). An intrachain disulfide couples Cys-320 to Cys-323. The disordered stretch occupies residues 326–409; that stretch reads GVGTRPKDDE…GDSALGENEL (84 aa). Polar residues predominate over residues 341-355; sequence RPNSRPATRTSSPAP. A compositionally biased stretch (basic residues) spans 358–367; the sequence is QRQKKEKKSK. Residues 368–384 show a composition bias toward basic and acidic residues; sequence KQDDEVDKALTSDEERN. Thr-378 is subject to Phosphothreonine; by host. The residue at position 379 (Ser-379) is a Phosphoserine; by host.

It belongs to the gammacoronavirus nucleocapsid protein family. As to quaternary structure, homooligomer. Both monomeric and oligomeric forms interact with RNA. Interacts with protein M. Interacts with NSP3; this interaction serves to tether the genome to the newly translated replicase-transcriptase complex at a very early stage of infection. ADP-ribosylated. The ADP-ribosylation is retained in the virion during infection. In terms of processing, phosphorylated on serine and threonine residues.

It is found in the virion. Its subcellular location is the host endoplasmic reticulum-Golgi intermediate compartment. It localises to the host Golgi apparatus. Its function is as follows. Packages the positive strand viral genome RNA into a helical ribonucleocapsid (RNP) and plays a fundamental role during virion assembly through its interactions with the viral genome and membrane protein M. Plays an important role in enhancing the efficiency of subgenomic viral RNA transcription as well as viral replication. The sequence is that of Nucleoprotein from Avian infectious bronchitis virus (strain H120) (IBV).